A 188-amino-acid polypeptide reads, in one-letter code: Peptidyl-prolyl cis-trans isomerase H (188 aa).

N-acetylalanine is present on A2. The region spanning 14–176 (FFDVSIGGQE…WTHSLTCPAL (163 aa)) is the PPIase cyclophilin-type domain.

It belongs to the cyclophilin-type PPIase family. PPIase H subfamily. Interacts directly with PRPF4. Part of a heteromeric complex containing PPIH, PRPF3 and PRPF4 that is stable in the absence of RNA. Component of the U4/U6-U5 tri-snRNP complex composed of the U4, U6 and U5 snRNAs and at least PRPF3, PRPF4, PRPF6, PRPF8, PRPF31, SNRNP200, TXNL4A, SNRNP40, DDX23, CD2BP2, PPIH, SNU13, EFTUD2, SART1 and USP39. Heterodimer with PRPF18. Heterodimer with PRPF18.

The protein localises to the nucleus speckle. It is found in the cytoplasm. It catalyses the reaction [protein]-peptidylproline (omega=180) = [protein]-peptidylproline (omega=0). With respect to regulation, inhibited by cyclosporin A. Its function is as follows. PPIase that catalyzes the cis-trans isomerization of proline imidic peptide bonds in oligopeptides and may therefore assist protein folding. Participates in pre-mRNA splicing. May play a role in the assembly of the U4/U5/U6 tri-snRNP complex, one of the building blocks of the spliceosome. May act as a chaperone. This chain is Peptidyl-prolyl cis-trans isomerase H (Ppih), found in Mus musculus (Mouse).